We begin with the raw amino-acid sequence, 436 residues long: ATP-dependent 6-phosphofructokinase (436 aa).

Residues G90, 155-156, and 180-183 contribute to the ATP site; these read RG and GDGT. D181 serves as a coordination point for Mg(2+). Substrate-binding positions include 209–211, 254–256, E307, and 362–365; these read TID, MGR, and YMIR. The Proton acceptor role is filled by D211.

The protein belongs to the phosphofructokinase type A (PFKA) family. PPi-dependent PFK group II subfamily. Atypical ATP-dependent clade 'X' sub-subfamily. Homodimer. Aggregates to a homotetramer after activation by ATP. Mg(2+) is required as a cofactor.

It localises to the cytoplasm. The enzyme catalyses beta-D-fructose 6-phosphate + ATP = beta-D-fructose 1,6-bisphosphate + ADP + H(+). It participates in carbohydrate degradation; glycolysis; D-glyceraldehyde 3-phosphate and glycerone phosphate from D-glucose: step 3/4. Its activity is regulated as follows. Activated by nucleoside triphosphates. Inhibited by phosphoenolpyruvate. EDTA and biphosphonates play the role of inhibitors of kinase activity. Its function is as follows. Catalyzes the phosphorylation of D-fructose 6-phosphate to fructose 1,6-bisphosphate by ATP, the first committing step of glycolysis. The sequence is that of ATP-dependent 6-phosphofructokinase (PPi-PFK) from Entamoeba histolytica (strain ATCC 30459 / HM-1:IMSS / ABRM).